Reading from the N-terminus, the 1257-residue chain is Period circadian protein homolog 2 (1257 aa).

Residues 1–59 (MNGYVDFSPSPTSPTQEPGEPQPTQAVLQEDVDMSSGSSGNENCSTGRDSQGSDCDDSG) are disordered. Over residues 8–25 (SPSPTSPTQEPGEPQPTQ) the composition is skewed to low complexity. The span at 35–53 (SSGSSGNENCSTGRDSQGS) shows a compositional bias: polar residues. The short motif at 109–118 (LIRTLRELKV) is the Nuclear export signal 1 element. One can recognise a PAS 1 domain in the interval 179 to 246 (ITSEYIVKNS…FHSYTTPYKL (68 aa)). An LXXLL motif is present at residues 306–310 (LCCLL). Residues 319–385 (YEAPRIPPEK…MLAIHKKILQ (67 aa)) form the PAS 2 domain. One can recognise a PAC domain in the interval 393 to 436 (YSPIRFRTRNGEYITLDTSWSSFINPWSRKISFIIGRHKVRVGP). The Nuclear export signal 2 motif lies at 460–469 (LTEQIHRLLM). Residues 471–567 (PVPHSGSSGY…RDSSGASLPK (97 aa)) are disordered. The important for protein stability stretch occupies residues 478-482 (SGYGS). Composition is skewed to polar residues over residues 493–504 (MSQTSSSDSNGQ) and 518–528 (SGKSQSKSHFS). The segment at 510–709 (RRSGIFKTSG…DAAGGLSQEK (200 aa)) is CSNK1E binding domain. Serine 525, serine 528, serine 531, serine 538, and serine 544 each carry phosphoserine. A compositionally biased stretch (polar residues) spans 541–555 (EMQSSPPAQVRSVTT). Threonine 554 is subject to Phosphothreonine. Serine 659, serine 693, serine 697, serine 706, serine 758, and serine 763 each carry phosphoserine. 2 disordered regions span residues 678–706 (DKKPQPELETVEDVASGPESQDDAAGGLS) and 757–833 (RSRA…CPSA). The Nuclear localization signal signature appears at 778–794 (KKTGKNRKLKSKRVKTR). Residues 779–792 (KTGKNRKLKSKRVK) show a composition bias toward basic residues. Residues 821–832 (SPSDTSQSSCPS) show a composition bias toward low complexity. Threonine 858 is subject to Phosphothreonine. The interaction with PPARG stretch occupies residues 882–1067 (EFAVQPLPFA…DLCSATGSAL (186 aa)). The residue at position 939 (serine 939) is a Phosphoserine. Threonine 964 is modified (phosphothreonine). Residue serine 971 is modified to Phosphoserine. Positions 983–990 (LQLNLLQL) match the Nuclear export signal 3 motif. Positions 993 to 1044 (APESSTGAAGTLGTTGTAASGLDCTSGASRDRQPKAPPTCSEPSDTQNSDAI) are disordered. Residues 996-1014 (SSTGAAGTLGTTGTAASGL) show a composition bias toward low complexity. The span at 1033-1044 (SEPSDTQNSDAI) shows a compositional bias: polar residues. An LXXLL motif is present at residues 1051 to 1055 (LNLLL). Residues 1070 to 1089 (SGASATSDSLGSSSLGCDTS) are compositionally biased toward low complexity. Residues 1070 to 1108 (SGASATSDSLGSSSLGCDTSRSGAGSSDTSHTSKYFGSI) are disordered. The segment covering 1090-1108 (RSGAGSSDTSHTSKYFGSI) has biased composition (polar residues). Serine 1126 bears the Phosphoserine mark. Positions 1157–1257 (SRDLQAVLKE…LANPRKEAQT (101 aa)) are CRY binding domain. A disordered region spans residues 1226–1257 (EEDSPSLGLCDTSEAKEEESGQLANPRKEAQT).

As to quaternary structure, homodimer. Component of the circadian core oscillator, which includes the CRY proteins, CLOCK or NPAS2, BMAL1 or BMAL2, CSNK1D and/or CSNK1E, TIMELESS, and the PER proteins. Interacts with CLOCK-BMAL1 (off DNA). Interacts directly with PER1 and PER3, and through a C-terminal domain, with CRY1 and CRY2. Interacts (via PAS 2 domain) with TIMELESS. Interacts with NFIL3. Different large complexes have been identified with different repressive functions. The core of PER complexes is composed of at least PER1, PER2, PER3, CRY1, CRY2, CSNK1D and/or CSNK1E. The large PER complex involved in the repression of transcriptional termination is composed of at least PER2, CDK9, DDX5, DHX9, NCBP1 and POLR2A (active). The large PER complex involved in the histone deacetylation is composed of at least HDAC1, PER2, SFPQ and SIN3A. The large PER complex involved in the histone methylation is composed of at least PER2, CBX3, TRIM28, SUV39H1 and/or SUV39H2; CBX3 mediates the formation of the complex. Interacts with SETX; the interaction inhibits termination of circadian target genes. Interacts with the nuclear receptors HNF4A, NR1D1, NR4A2, RORA, PPARA, PPARG and THRA; the interaction with at least PPARG is ligand dependent. Interacts with PML. Interacts (phosphorylated) with BTRC and FBXW11; the interactions trigger proteasomal degradation. Interacts with NONO and SFPQ. Interacts with CAVIN3. Interacts with MAGEL2. Interacts with MAP1LC3B. Interacts with HNF4A. Post-translationally, acetylated. Deacetylated by SIRT1, resulting in decreased protein stability. Deacetylated by SIRT6, preventing its degradation by the proteasome, resulting in increased protein stability. In terms of processing, phosphorylated by CSNK1E and CSNK1D. Phosphorylation results in PER2 protein degradation. May be dephosphorylated by PP1. Ubiquitinated, leading to its proteasomal degradation. Ubiquitination may be inhibited by CRY1. In terms of tissue distribution, expressed in all tissues examined including eye, brain, heart, lung, spleen, liver, pancreas and kidney. In the CNS, highly expressed in the SCN, internal granular layer of granular cells of the olfactory bulb, tuberculum olfactorium, piriform cortex, gyrus dentatus of the hippocampus, cerebellum, pars tuberalis/median eminence, and pituitary, and moderately in the tenia tecta, caudate putamen, accumbens nucleus, superior and inferior colliculus and pineal gland.

It is found in the nucleus. The protein resides in the cytoplasm. It localises to the perinuclear region. Functionally, transcriptional repressor which forms a core component of the circadian clock. The circadian clock, an internal time-keeping system, regulates various physiological processes through the generation of approximately 24 hour circadian rhythms in gene expression, which are translated into rhythms in metabolism and behavior. It is derived from the Latin roots 'circa' (about) and 'diem' (day) and acts as an important regulator of a wide array of physiological functions including metabolism, sleep, body temperature, blood pressure, endocrine, immune, cardiovascular, and renal function. Consists of two major components: the central clock, residing in the suprachiasmatic nucleus (SCN) of the brain, and the peripheral clocks that are present in nearly every tissue and organ system. Both the central and peripheral clocks can be reset by environmental cues, also known as Zeitgebers (German for 'timegivers'). The predominant Zeitgeber for the central clock is light, which is sensed by retina and signals directly to the SCN. The central clock entrains the peripheral clocks through neuronal and hormonal signals, body temperature and feeding-related cues, aligning all clocks with the external light/dark cycle. Circadian rhythms allow an organism to achieve temporal homeostasis with its environment at the molecular level by regulating gene expression to create a peak of protein expression once every 24 hours to control when a particular physiological process is most active with respect to the solar day. Transcription and translation of core clock components (CLOCK, NPAS2, BMAL1, BMAL2, PER1, PER2, PER3, CRY1 and CRY2) plays a critical role in rhythm generation, whereas delays imposed by post-translational modifications (PTMs) are important for determining the period (tau) of the rhythms (tau refers to the period of a rhythm and is the length, in time, of one complete cycle). A diurnal rhythm is synchronized with the day/night cycle, while the ultradian and infradian rhythms have a period shorter and longer than 24 hours, respectively. Disruptions in the circadian rhythms contribute to the pathology of cardiovascular diseases, cancer, metabolic syndrome and aging. A transcription/translation feedback loop (TTFL) forms the core of the molecular circadian clock mechanism. Transcription factors, CLOCK or NPAS2 and BMAL1 or BMAL2, form the positive limb of the feedback loop, act in the form of a heterodimer and activate the transcription of core clock genes and clock-controlled genes (involved in key metabolic processes), harboring E-box elements (5'-CACGTG-3') within their promoters. The core clock genes: PER1/2/3 and CRY1/2 which are transcriptional repressors form the negative limb of the feedback loop and interact with the CLOCK|NPAS2-BMAL1|BMAL2 heterodimer inhibiting its activity and thereby negatively regulating their own expression. This heterodimer also activates nuclear receptors NR1D1/2 and RORA/B/G, which form a second feedback loop and which activate and repress BMAL1 transcription, respectively. PER1 and PER2 proteins transport CRY1 and CRY2 into the nucleus with appropriate circadian timing, but also contribute directly to repression of clock-controlled target genes through interaction with several classes of RNA-binding proteins, helicases and others transcriptional repressors. PER appears to regulate circadian control of transcription by at least three different modes. First, interacts directly with the CLOCK-BMAL1 at the tail end of the nascent transcript peak to recruit complexes containing the SIN3-HDAC that remodel chromatin to repress transcription. Second, brings H3K9 methyltransferases such as SUV39H1 and SUV39H2 to the E-box elements of the circadian target genes, like PER2 itself or PER1. The recruitment of each repressive modifier to the DNA seems to be very precisely temporally orchestrated by the large PER complex, the deacetylases acting before than the methyltransferases. Additionally, large PER complexes are also recruited to the target genes 3' termination site through interactions with RNA-binding proteins and helicases that may play a role in transcription termination to regulate transcription independently of CLOCK-BMAL1 interactions. Recruitment of large PER complexes to the elongating polymerase at PER and CRY termination sites inhibited SETX action, impeding RNA polymerase II release and thereby repressing transcriptional reinitiation. May propagate clock information to metabolic pathways via the interaction with nuclear receptors. Coactivator of PPARA and corepressor of NR1D1, binds rhythmically at the promoter of nuclear receptors target genes like BMAL1 or G6PC1. Directly and specifically represses PPARG proadipogenic activity by blocking PPARG recruitment to target promoters and thereby transcriptional activation. Required for fatty acid and lipid metabolism, is involved as well in the regulation of circulating insulin levels. Plays an important role in the maintenance of cardiovascular functions through the regulation of NO and vasodilatatory prostaglandins production in aortas. Controls circadian glutamate uptake in synaptic vesicles through the regulation of VGLUT1 expression. May also be involved in the regulation of inflammatory processes. Represses the CLOCK-BMAL1 induced transcription of BHLHE40/DEC1 and ATF4. Negatively regulates the formation of the TIMELESS-CRY1 complex by competing with TIMELESS for binding to CRY1. This chain is Period circadian protein homolog 2, found in Rattus norvegicus (Rat).